A 363-amino-acid chain; its full sequence is Protein-arginine kinase (363 aa).

The Phosphagen kinase C-terminal domain occupies 24–254 (IVLSSRIRLA…AQLIEQERSA (231 aa)). ATP contacts are provided by residues 27–31 (SSRIR), H92, R125, 176–180 (RASVM), and 207–212 (RGIYGE). The short motif at 337 to 342 (RDIRRA) is the RDXXRA motif of the pArg binding pocket involved in allosteric regulation element.

The protein belongs to the ATP:guanido phosphotransferase family.

It catalyses the reaction L-arginyl-[protein] + ATP = N(omega)-phospho-L-arginyl-[protein] + ADP + H(+). With respect to regulation, appears to be allosterically activated by the binding of pArg-containing polypeptides to the pArg-binding pocket localized in the C-terminal domain of McsB. Functionally, catalyzes the specific phosphorylation of arginine residues in a large number of proteins. Is part of the bacterial stress response system. Protein arginine phosphorylation has a physiologically important role and is involved in the regulation of many critical cellular processes, such as protein homeostasis, motility, competence, and stringent and stress responses, by regulating gene expression and protein activity. The chain is Protein-arginine kinase from Bacillus licheniformis (strain ATCC 14580 / DSM 13 / JCM 2505 / CCUG 7422 / NBRC 12200 / NCIMB 9375 / NCTC 10341 / NRRL NRS-1264 / Gibson 46).